The following is a 470-amino-acid chain: Dihydrolipoyl dehydrogenase (470 aa).

Residues 39 to 47 (EKATLGGVC), Lys-56, and Ala-119 each bind FAD. An intrachain disulfide couples Cys-47 to Cys-52. Residues 183 to 187 (GGGYI), Glu-206, and 272 to 275 (TVGR) contribute to the NAD(+) site. Residues Asp-315 and Ala-323 each coordinate FAD. The active-site Proton acceptor is the His-447.

This sequence belongs to the class-I pyridine nucleotide-disulfide oxidoreductase family. As to quaternary structure, homodimer. Component of two multienzyme complexes: pyruvate dehydrogenase complex and oxoglutarate dehydrogenase complex. The cofactor is FAD.

The protein resides in the cytoplasm. The enzyme catalyses N(6)-[(R)-dihydrolipoyl]-L-lysyl-[protein] + NAD(+) = N(6)-[(R)-lipoyl]-L-lysyl-[protein] + NADH + H(+). Functionally, catalyzes the oxidation of dihydrolipoamide to lipoamide. The polypeptide is Dihydrolipoyl dehydrogenase (pdhD) (Bacillus subtilis (strain 168)).